Consider the following 228-residue polypeptide: Cytidylate kinase (228 aa).

Residue 17-25 participates in ATP binding; sequence GPSASGKGT.

It belongs to the cytidylate kinase family. Type 1 subfamily.

Its subcellular location is the cytoplasm. The enzyme catalyses CMP + ATP = CDP + ADP. It carries out the reaction dCMP + ATP = dCDP + ADP. In Paraburkholderia phytofirmans (strain DSM 17436 / LMG 22146 / PsJN) (Burkholderia phytofirmans), this protein is Cytidylate kinase.